Reading from the N-terminus, the 54-residue chain is UPF0391 membrane protein BMEI0373 (54 aa).

Transmembrane regions (helical) follow at residues 5–25 and 29–48; these read VLVF…GIAG and GIAQ…SLIA.

Belongs to the UPF0391 family.

Its subcellular location is the cell membrane. The polypeptide is UPF0391 membrane protein BMEI0373 (Brucella melitensis biotype 1 (strain ATCC 23456 / CCUG 17765 / NCTC 10094 / 16M)).